The primary structure comprises 461 residues: Flavin-containing monooxygenase FMO GS-OX-like 8 (461 aa).

20 to 25 (GAGPSG) is an FAD binding site. 220–225 (GCSMSG) provides a ligand contact to NADP(+).

This sequence belongs to the FMO family. Interacts with EER5. The cofactor is FAD.

Its function is as follows. Catalyzes the conversion of methylthioalkyl glucosinolates of any chain length into methylsulfinylalkyl glucosinolates. The chain is Flavin-containing monooxygenase FMO GS-OX-like 8 from Arabidopsis thaliana (Mouse-ear cress).